The sequence spans 122 residues: MELEKKGIELTLQRAHPFYKGIMLEEKLADLEKMKQKKLFSRISLSNAKASQEIDLESAIKEEANSDALYVEFESLEESKQLDVVLHLLRDRFLYCLYCGCHYDSQEDLIENCPGINEEDHE.

This is an uncharacterized protein from Schizosaccharomyces pombe (strain 972 / ATCC 24843) (Fission yeast).